Reading from the N-terminus, the 167-residue chain is RNA pyrophosphohydrolase (167 aa).

Positions Pro8–Lys158 constitute a Nudix hydrolase domain. The Nudix box signature appears at Gly47–Asn68.

This sequence belongs to the Nudix hydrolase family. RppH subfamily. It depends on a divalent metal cation as a cofactor.

Functionally, accelerates the degradation of transcripts by removing pyrophosphate from the 5'-end of triphosphorylated RNA, leading to a more labile monophosphorylated state that can stimulate subsequent ribonuclease cleavage. This is RNA pyrophosphohydrolase from Rhodopseudomonas palustris (strain HaA2).